The chain runs to 589 residues: Kelch-like protein 25 (589 aa).

Residues 46–114 form the BTB domain; it reads TDVTLWAGDR…AYSSRIAINE (69 aa). Residues 149–250 form the BACK domain; it reads CLGMMLLSDA…LPSDCLQEAV (102 aa). Kelch repeat units lie at residues 296-340, 341-388, 389-444, 446-492, 494-538, and 539-585; these read TLLI…AIGC, KVYV…ELEN, CLYV…SAKL, LFVF…VLGS, IFIM…ASGN, and KLYV…STWK.

As to quaternary structure, component of the BCR(KLHL25) E3 ubiquitin ligase complex, at least composed of CUL3, KLHL25 and RBX1.

Its pathway is protein modification; protein ubiquitination. Its function is as follows. Substrate-specific adapter of a BCR (BTB-CUL3-RBX1) E3 ubiquitin ligase complex involved in various processes, such as translation homeostasis and lipid synthesis. The BCR(KLHL25) ubiquitin ligase complex acts by mediating ubiquitination of hypophosphorylated EIF4EBP1 (4E-BP1): ubiquitination and subsequent degradation of hypophosphorylated EIF4EBP1 (4E-BP1) probably serves as a homeostatic mechanism to maintain translation and prevent eIF4E inhibition when eIF4E levels are low. The BCR(KLHL25) complex does not target EIF4EBP1 (4E-BP1) when it is hyperphosphorylated or associated with eIF4E. The BCR(KLHL25) complex also acts as a regulator of lipid synthesis by mediating ubiquitination and degradation of ACLY, thereby inhibiting lipid synthesis. BCR(KLHL25)-mediated degradation of ACLY promotes fatty acid oxidation and is required for differentiation of inducible regulatory T (iTreg) cells. The polypeptide is Kelch-like protein 25 (Homo sapiens (Human)).